We begin with the raw amino-acid sequence, 449 residues long: Tripartite motif-containing protein 64B (449 aa).

Residues 15-56 (CCICVNYFIDPVTIDCGHSFCRPCLCLCSEEGRAPMRCPSCR) form an RING-type zinc finger. Residues 87-128 (SSDNICVLHEETKELFCEADKRLLCGPCSESPEHMAHSHSPI) form a B box-type zinc finger. Positions 92, 95, 114, and 120 each coordinate Zn(2+). Positions 189 to 225 (LDEEEQRHLQALEREAEELFQQLQDSQVRMTQHLERM) form a coiled coil. Positions 268-449 (ELTSWCITGV…LRPFFCFGCT (182 aa)) constitute a B30.2/SPRY domain.

The protein belongs to the TRIM/RBCC family.

The polypeptide is Tripartite motif-containing protein 64B (TRIM64B) (Homo sapiens (Human)).